The sequence spans 160 residues: Cathelin-related peptide SC5 (160 aa).

Residues 1–29 form the signal peptide; the sequence is METQRASLSLGRRSLWLLLLGLVLASASA. Positions 30-131 are excised as a propeptide; it reads QALSYREAVL…DITCAEPQSV (102 aa). Cystine bridges form between C86/C97 and C108/C125.

This sequence belongs to the cathelicidin family.

It localises to the secreted. Its function is as follows. Broad spectrum bactericidal agent. The sequence is that of Cathelin-related peptide SC5 from Ovis aries (Sheep).